The sequence spans 380 residues: Probable protein phosphatase 2C 27 (380 aa).

Positions 84–344 (RSGSCAEQGA…DNLTVIVVCF (261 aa)) constitute a PPM-type phosphatase domain. The Mn(2+) site is built by D128, G129, D292, and D335.

This sequence belongs to the PP2C family. The cofactor is Mg(2+). Mn(2+) serves as cofactor. In terms of tissue distribution, expressed in roots, leaves, stems, flower, and trichomes.

It is found in the nucleus. It localises to the cytoplasm. It catalyses the reaction O-phospho-L-seryl-[protein] + H2O = L-seryl-[protein] + phosphate. The catalysed reaction is O-phospho-L-threonyl-[protein] + H2O = L-threonyl-[protein] + phosphate. Its function is as follows. Confers salt tolerance by triggering the expression of stress-responsive genes. The sequence is that of Probable protein phosphatase 2C 27 from Arabidopsis thaliana (Mouse-ear cress).